Here is a 135-residue protein sequence, read N- to C-terminus: Probable 5-hydroxyisourate hydrolase R09H10.3 (135 aa).

The first 20 residues, 1–20 (MNKFSLFFALTATLMTITES), serve as a signal peptide directing secretion. Substrate contacts are provided by H30, R68, and Y132.

The protein belongs to the transthyretin family. 5-hydroxyisourate hydrolase subfamily. In terms of assembly, homotetramer.

The enzyme catalyses 5-hydroxyisourate + H2O = 5-hydroxy-2-oxo-4-ureido-2,5-dihydro-1H-imidazole-5-carboxylate + H(+). Functionally, catalyzes the hydrolysis of 5-hydroxyisourate (HIU) to 2-oxo-4-hydroxy-4-carboxy-5-ureidoimidazoline (OHCU). The sequence is that of Probable 5-hydroxyisourate hydrolase R09H10.3 from Caenorhabditis elegans.